Here is a 122-residue protein sequence, read N- to C-terminus: Large ribosomal subunit protein uL14 (122 aa).

The protein belongs to the universal ribosomal protein uL14 family. In terms of assembly, part of the 50S ribosomal subunit. Forms a cluster with proteins L3 and L19. In the 70S ribosome, L14 and L19 interact and together make contacts with the 16S rRNA in bridges B5 and B8.

Its function is as follows. Binds to 23S rRNA. Forms part of two intersubunit bridges in the 70S ribosome. This Pseudomonas aeruginosa (strain LESB58) protein is Large ribosomal subunit protein uL14.